A 1034-amino-acid polypeptide reads, in one-letter code: Presequence protease, mitochondrial (1034 aa).

A mitochondrion-targeting transit peptide spans methionine 1–serine 29. Histidine 128 lines the Zn(2+) pocket. Residue glutamate 131 is the Proton acceptor of the active site. The Zn(2+) site is built by histidine 132 and glutamate 229.

It belongs to the peptidase M16 family. PreP subfamily. In terms of assembly, homodimer. The cofactor is Zn(2+).

It localises to the mitochondrion. Its function is as follows. ATP-independent protease that degrades mitochondrial transit peptides after their cleavage. Also degrades other unstructured peptides. The sequence is that of Presequence protease, mitochondrial from Drosophila melanogaster (Fruit fly).